Consider the following 150-residue polypeptide: Large ribosomal subunit protein eL19 (150 aa).

Positions 56-89 (KGQSRARARAFQEARKKGRHRGPGSKKGKKTARM) are disordered. A compositionally biased stretch (basic residues) spans 71–89 (KKGRHRGPGSKKGKKTARM).

This sequence belongs to the eukaryotic ribosomal protein eL19 family. Part of the 50S ribosomal subunit.

Binds to the 23S rRNA. This is Large ribosomal subunit protein eL19 from Thermococcus kodakarensis (strain ATCC BAA-918 / JCM 12380 / KOD1) (Pyrococcus kodakaraensis (strain KOD1)).